The following is a 171-amino-acid chain: Shikimate kinase (171 aa).

14–19 (GAGKST) provides a ligand contact to ATP. Ser18 is a Mg(2+) binding site. Substrate-binding residues include Asp36, Arg60, and Gly82. Arg120 contacts ATP. A substrate-binding site is contributed by Arg139. Gln156 lines the ATP pocket.

The protein belongs to the shikimate kinase family. As to quaternary structure, monomer. Mg(2+) is required as a cofactor.

It localises to the cytoplasm. The catalysed reaction is shikimate + ATP = 3-phosphoshikimate + ADP + H(+). The protein operates within metabolic intermediate biosynthesis; chorismate biosynthesis; chorismate from D-erythrose 4-phosphate and phosphoenolpyruvate: step 5/7. Its function is as follows. Catalyzes the specific phosphorylation of the 3-hydroxyl group of shikimic acid using ATP as a cosubstrate. The protein is Shikimate kinase of Psychromonas ingrahamii (strain DSM 17664 / CCUG 51855 / 37).